The sequence spans 347 residues: Holliday junction branch migration complex subunit RuvB (347 aa).

The tract at residues 1 to 180 (MTSRVVSPEQ…FGIPCRMNFY (180 aa)) is large ATPase domain (RuvB-L). Residues Leu19, Arg20, Gly61, Lys64, Thr65, Thr66, 127-129 (EDF), Arg170, Tyr180, and Arg217 each bind ATP. Mg(2+) is bound at residue Thr65. The interval 181–251 (EPAELEAIVS…VADAALNRLE (71 aa)) is small ATPAse domain (RuvB-S). The interval 254–347 (RIGLDAMDRR…LLTRMDEEGE (94 aa)) is head domain (RuvB-H). Arg290, Arg309, and Arg314 together coordinate DNA.

Belongs to the RuvB family. As to quaternary structure, homohexamer. Forms an RuvA(8)-RuvB(12)-Holliday junction (HJ) complex. HJ DNA is sandwiched between 2 RuvA tetramers; dsDNA enters through RuvA and exits via RuvB. An RuvB hexamer assembles on each DNA strand where it exits the tetramer. Each RuvB hexamer is contacted by two RuvA subunits (via domain III) on 2 adjacent RuvB subunits; this complex drives branch migration. In the full resolvosome a probable DNA-RuvA(4)-RuvB(12)-RuvC(2) complex forms which resolves the HJ.

It localises to the cytoplasm. The catalysed reaction is ATP + H2O = ADP + phosphate + H(+). Functionally, the RuvA-RuvB-RuvC complex processes Holliday junction (HJ) DNA during genetic recombination and DNA repair, while the RuvA-RuvB complex plays an important role in the rescue of blocked DNA replication forks via replication fork reversal (RFR). RuvA specifically binds to HJ cruciform DNA, conferring on it an open structure. The RuvB hexamer acts as an ATP-dependent pump, pulling dsDNA into and through the RuvAB complex. RuvB forms 2 homohexamers on either side of HJ DNA bound by 1 or 2 RuvA tetramers; 4 subunits per hexamer contact DNA at a time. Coordinated motions by a converter formed by DNA-disengaged RuvB subunits stimulates ATP hydrolysis and nucleotide exchange. Immobilization of the converter enables RuvB to convert the ATP-contained energy into a lever motion, pulling 2 nucleotides of DNA out of the RuvA tetramer per ATP hydrolyzed, thus driving DNA branch migration. The RuvB motors rotate together with the DNA substrate, which together with the progressing nucleotide cycle form the mechanistic basis for DNA recombination by continuous HJ branch migration. Branch migration allows RuvC to scan DNA until it finds its consensus sequence, where it cleaves and resolves cruciform DNA. The sequence is that of Holliday junction branch migration complex subunit RuvB from Paramagnetospirillum magneticum (strain ATCC 700264 / AMB-1) (Magnetospirillum magneticum).